The sequence spans 394 residues: Elongation factor Tu (394 aa).

Positions 10–204 constitute a tr-type G domain; it reads KPHVNVGTIG…HLDTYIPEPE (195 aa). Residues 19 to 26 are G1; sequence GHVDHGKT. Residue 19–26 participates in GTP binding; the sequence is GHVDHGKT. Threonine 26 contacts Mg(2+). The segment at 60-64 is G2; it reads GITIN. The tract at residues 81–84 is G3; that stretch reads DCPG. GTP-binding positions include 81–85 and 136–139; these read DCPGH and NKCD. A G4 region spans residues 136–139; it reads NKCD. Residues 174–176 are G5; the sequence is SAL.

The protein belongs to the TRAFAC class translation factor GTPase superfamily. Classic translation factor GTPase family. EF-Tu/EF-1A subfamily. Monomer.

The protein resides in the cytoplasm. The enzyme catalyses GTP + H2O = GDP + phosphate + H(+). Functionally, GTP hydrolase that promotes the GTP-dependent binding of aminoacyl-tRNA to the A-site of ribosomes during protein biosynthesis. The chain is Elongation factor Tu from Actinobacillus pleuropneumoniae serotype 5b (strain L20).